A 542-amino-acid polypeptide reads, in one-letter code: Esterase 6 (542 aa).

The signal sequence occupies residues Met-1–Ala-19. Residue Asn-40 is glycosylated (N-linked (GlcNAc...) asparagine). Cys-84 and Cys-103 are oxidised to a cystine. The active-site Acyl-ester intermediate is the Ser-207. Cys-259 and Cys-271 are disulfide-bonded. Asn-418 and Asn-454 each carry an N-linked (GlcNAc...) asparagine glycan. Residue His-464 is the Charge relay system of the active site. Cysteines 512 and 533 form a disulfide.

This sequence belongs to the type-B carboxylesterase/lipase family. In terms of assembly, monomer.

It is found in the secreted. The enzyme catalyses a carboxylic ester + H2O = an alcohol + a carboxylate + H(+). Functionally, transferred from the ejaculatory bulbs of males to the female genitals upon copulation, plays an important role in the reproductive biology. In Drosophila simulans (Fruit fly), this protein is Esterase 6 (Est-6).